Here is a 3423-residue protein sequence, read N- to C-terminus: Genome polyprotein (3423 aa).

The tract at residues 1-25 (MKNPKKKSGGFRIVNMLKRGVARVS) is disordered. Topologically, residues 1 to 104 (MKNPKKKSGG…INARKEKKRR (104 aa)) are cytoplasmic. Residues 37–72 (LLLGHGPIRMVLAILAFLRFTAIKPSLGLINRWGSV) are hydrophobic; homodimerization of capsid protein C. Residues 105–122 (GTDTSVGIVGLLLTTAMA) constitute a propeptide, ER anchor for capsid protein C, removed in mature form by serine protease NS3. Residues 105–125 (GTDTSVGIVGLLLTTAMAVEV) traverse the membrane as a helical segment. At 126 to 249 (TRRGNAYYMY…YTKHLIRVEN (124 aa)) the chain is on the extracellular side. A glycan (N-linked (GlcNAc...) asparagine; by host) is linked at asparagine 192. Residues 250–269 (WIFRNPGFALAAAAIAWLLG) form a helical membrane-spanning segment. Topologically, residues 270 to 274 (SSTSQ) are cytoplasmic. A helical transmembrane segment spans residues 275 to 290 (KVIYLVMILLIAPAYS). Residues 291-745 (IRCIGVSNRD…HQIFGAAFKS (455 aa)) are Extracellular-facing. Lysine 328 is covalently cross-linked (Glycyl lysine isopeptide (Lys-Gly) (interchain with G-Cter in ubiquitin)). 2 disulfide bridges follow: cysteine 350/cysteine 406 and cysteine 382/cysteine 411. The segment at 388–401 (DRGWGNGCGLFGKG) is fusion peptide. The N-linked (GlcNAc...) asparagine; by host glycan is linked to asparagine 444. Intrachain disulfides connect cysteine 480/cysteine 581 and cysteine 598/cysteine 629. Residue lysine 571 forms a Glycyl lysine isopeptide (Lys-Gly) (interchain with G-Cter in ubiquitin) linkage. The helical transmembrane segment at 746–767 (LFGGMSWFSQILIGTLLVWLGL) threads the bilayer. Topologically, residues 768–773 (NTKNGS) are cytoplasmic. The helical transmembrane segment at 774–794 (ISLMCLALGGVLIFLSTAVSA) threads the bilayer. At 795–1177 (DVGCSVDFSK…EGLKKRMTTK (383 aa)) the chain is on the lumenal side. 6 disulfides stabilise this stretch: cysteine 798–cysteine 809, cysteine 849–cysteine 937, cysteine 973–cysteine 1017, cysteine 1074–cysteine 1123, cysteine 1085–cysteine 1106, and cysteine 1107–cysteine 1110. 2 N-linked (GlcNAc...) asparagine; by host glycosylation sites follow: asparagine 924 and asparagine 1001. Residues 1178–1198 (IIISTSMAVLVAMILGGFSMS) traverse the membrane as a helical segment. The Cytoplasmic segment spans residues 1199–1220 (DLAKLAILMGATFAEMNTGGDV). A helical transmembrane segment spans residues 1221–1241 (AHLALIAAFKVRPALLVSFIF). Topologically, residues 1242-1270 (RANWTPRESMLLALASCLLQTAISALEGD) are lumenal. Residues 1271–1291 (LMVPINGFALAWLAIRAMVVP) traverse the membrane as a helical segment. Over 1292–1295 (RTDN) the chain is Cytoplasmic. The helical transmembrane segment at 1296 to 1316 (ITLAILAALTPLARGTLLVAW) threads the bilayer. Residues 1317–1345 (RAGLATCGGFMLLSLKGKGSVKKNLPFVM) lie on the Lumenal side of the membrane. The helical transmembrane segment at 1346-1366 (ALGLTAVRLVDPINVVGLLLL) threads the bilayer. At 1367 to 1373 (TRSGKRS) the chain is on the cytoplasmic side. Residues 1374 to 1394 (WPPSEVLTAVGLICALAGGFA) form a helical membrane-spanning segment. At 1395–1397 (KAD) the chain is on the lumenal side. A helical membrane pass occupies residues 1398 to 1418 (IEMAGPMAAVGLLIVSYVVSG). Topologically, residues 1419–1472 (KSVDMYIERAGDITWEKDAEVTGNSPRLDVALDESGDFSLVEDDGPPMREIILK) are cytoplasmic. The interacts with and activates NS3 protease stretch occupies residues 1425–1464 (IERAGDITWEKDAEVTGNSPRLDVALDESGDFSLVEDDGP). Residues 1429–1451 (GDITWEKDAEVTGNSPRLDVALD) are disordered. Positions 1473-1493 (VVLMAICGMNPIAIPFAAGAW) form an intramembrane region, helical. The Lumenal portion of the chain corresponds to 1494-2170 (YVYVKTGKRS…KAAAAQLPET (677 aa)). Residues 1503–1680 (SGALWDVPAP…RREEETPVEC (178 aa)) enclose the Peptidase S7 domain. Catalysis depends on charge relay system; for serine protease NS3 activity residues histidine 1553, aspartate 1577, and serine 1637. The Helicase ATP-binding domain occupies 1683–1839 (PSMLKKKQLT…DSNSPIMDTE (157 aa)). The segment at 1687–1690 (KKKQ) is important for RNA-binding. 1696-1703 (LHPGAGKT) is a binding site for ATP. The DEAH box signature appears at 1787–1790 (DEAH). Positions 1834 to 2013 (PIMDTEVEVP…GLIASLYRPE (180 aa)) constitute a Helicase C-terminal domain. The residue at position 1891 (lysine 1891) is an N6-acetyllysine; by host. The chain crosses the membrane as a helical span at residues 2171 to 2191 (LETIMLLGLLGTVSLGIFFVL). Residues 2192-2195 (MRNK) are Lumenal-facing. Positions 2196 to 2216 (GIGKMGFGMVTLGASAWLMWL) form an intramembrane region, helical. Topologically, residues 2217–2218 (SE) are cytoplasmic. A helical transmembrane segment spans residues 2219 to 2239 (IEPARIACVLIVVFLLLVVLI). Residues 2240 to 2254 (PEPEKQRSPQDNQMA) are Lumenal-facing. An intramembrane region (helical) is located at residues 2255–2269 (IIIMVAVGLLGLITA). Topologically, residues 2270–2307 (NELGWLERTKSDLSHLMGRREEGATIGFSMDIDLRPAS) are lumenal. Residues 2308–2328 (AWAIYAALTTFITPAVQHAVT) constitute an intramembrane region (helical). Topologically, residues 2329-2344 (TSYNNYSLMAMATQAG) are lumenal. A helical transmembrane segment spans residues 2345–2365 (VLFGMGKGMPFYAWDFGVPLL). Residues 2366–2375 (MIGCYSQLTP) lie on the Cytoplasmic side of the membrane. The chain crosses the membrane as a helical span at residues 2376 to 2396 (LTLIVAIILLVAHYMYLIPGL). The Lumenal portion of the chain corresponds to 2397–2441 (QAAAARAAQKRTAAGIMKNPVVDGIVVTDIDTMTIDPQVEKKMGQ). A helical membrane pass occupies residues 2442–2462 (VLLIAVAVSSAILSRTAWGWG). Residues 2463 to 3423 (EAGALITAAT…GEEGSTPGVL (961 aa)) lie on the Cytoplasmic side of the membrane. The mRNA cap 0-1 NS5-type MT domain occupies 2521 to 2785 (GGGTGETLGE…DVNLGSGTRA (265 aa)). 2533–2539 (KARLNQM) is a GTP binding site. Residue serine 2576 participates in S-adenosyl-L-methionine binding. Serine 2576 bears the Phosphoserine mark. The active-site For 2'-O-MTase activity is the lysine 2581. The tract at residues 2597–2600 (VIDL) is SUMO-interacting motif (SIM). Residues glycine 2606, tryptophan 2607, threonine 2624, lysine 2625, histidine 2630, glutamate 2631, aspartate 2651, valine 2652, aspartate 2666, and isoleucine 2667 each contribute to the S-adenosyl-L-methionine site. Aspartate 2666 acts as the For 2'-O-MTase activity in catalysis. Position 2669–2675 (2669–2675 (ESSSSPE)) interacts with GTP. Lysine 2702 serves as the catalytic For 2'-O-MTase activity. 2733-2735 (RNS) is a binding site for GTP. Glutamate 2738 (for 2'-O-MTase activity) is an active-site residue. Tyrosine 2740 serves as a coordination point for S-adenosyl-L-methionine. The Nuclear localization signal (NLS) signature appears at 2908-2914 (KHKRPRV). Zn(2+) is bound by residues glutamate 2959, histidine 2963, cysteine 2968, and cysteine 2971. The RdRp catalytic domain occupies 3049–3199 (GRMYADDTAG…KPIDDRFAHA (151 aa)). 3 residues coordinate Zn(2+): histidine 3234, cysteine 3250, and cysteine 3369.

In the N-terminal section; belongs to the class I-like SAM-binding methyltransferase superfamily. mRNA cap 0-1 NS5-type methyltransferase family. As to quaternary structure, homodimer. Interacts with host SERTAD3; this interaction promotes capsid protein C degradation. Interacts with host CAPRIN1; this interaction is probably linked to the inhibition of stress granules formation by the virus. Interacts with host G3BP1; this interaction is probably linked to the inhibition of stress granules formation by the virus. In terms of assembly, forms heterodimers with envelope protein E in the endoplasmic reticulum and Golgi. Interacts with non-structural protein 2A. Homodimer; in the endoplasmic reticulum and Golgi. Interacts with host TYRO3, AXL and DC-SIGN proteins. Interacts with non-structural protein 2A. Interacts with host HAVCR1; this interaction likely mediates virus attachment to host cell. Interacts with host NCAM1. Interacts with host HSPA5. Interacts with Aedes aegypti SRPN25, APY and venom allergen-1 salivary proteins; the interactions do not affect Zika virus replication in human endothelial cells and keratinocytes. As to quaternary structure, homodimer; Homohexamer when secreted. Interacts with host TBK1. Interacts with host USP8. Interacts with envelope protein E. In terms of assembly, interacts with the structural protein prM/E complex, and the NS2B/NS3 protease complex. Forms a heterodimer with serine protease NS3. May form homooligomers. Interacts with human SPCS1. Interacts with non-structural protein 2A. As to quaternary structure, forms a heterodimer with NS2B. Interacts with NS4B. Interacts with unphosphorylated RNA-directed RNA polymerase NS5; this interaction stimulates RNA-directed RNA polymerase NS5 guanylyltransferase activity. Interacts with non-structural protein 2A. Interacts with host SHFL; this interaction promotes NS3 degradation via a lysosome-dependent pathway. Interacts with host CEP63; this interaction disorganizes the centrosome and inhibits host innate immune response. In terms of assembly, may interact with host ANKLE2; the interaction may cause defects in brain development, such as microcephaly. May interact with host SRPRA and SEC61G. Interacts with serine protease NS3. Interacts with NS1. As to quaternary structure, homodimer. Interacts with host STAT2; this interaction inhibits the phosphorylation of the latter, and, when all viral proteins are present (polyprotein), targets STAT2 for degradation. Interacts with host TBK1 and IKBKE; these interactions lead to the inhibition of the host RIG-I signaling pathway. Interacts with host PAF1 complex; the interaction may prevent the recruitment of the host PAF1 complex to interferon-responsive genes, and thus reduces the immune response. Interacts with serine protease NS3. Interacts with host KPNA2. Interacts with host ZSWIM8; this interaction allows STAT2 binding to ZSWIM8 and subsequent proteasomal degradation leading to inhibition of interferon signaling. In terms of processing, specific enzymatic cleavages in vivo yield mature proteins. Cleavages in the lumen of endoplasmic reticulum are performed by host signal peptidase, whereas cleavages in the cytoplasmic side are performed by serine protease NS3. Signal cleavage at the 2K-4B site requires a prior NS3 protease-mediated cleavage at the 4A-2K site. Post-translationally, cleaved in post-Golgi vesicles by a host furin, releasing the mature small envelope protein M, and peptide pr. This cleavage is incomplete as up to 30% of viral particles still carry uncleaved prM. N-glycosylation plays a role in virulence in mammalian and mosquito hosts, but may have no effect on neurovirulence. In terms of processing, ubiquitination by host TRIM7 promotes virus attachment and fusion of the virus and the host endosome membrane. Post-translationally, N-glycosylated. The excreted form is glycosylated, which is required for efficient secretion of the protein from infected cells. Ubiquitination by host TRIM22 leads to proteasomal degradation. In terms of processing, acetylated by host KAT5. Acetylation modulates NS3 RNA-binding and unwinding activities and plays an important positive role for viral replication. Post-translationally, phosphorylated on serines residues. This phosphorylation may trigger NS5 nuclear localization. Sumoylated, required for regulating IFN induced interferon stimulated genes/ISGs.

Its subcellular location is the virion. It localises to the host nucleus. It is found in the host cytoplasm. The protein localises to the host perinuclear region. The protein resides in the secreted. Its subcellular location is the virion membrane. It localises to the host endoplasmic reticulum membrane. It is found in the host cell surface. It carries out the reaction a 5'-end (5'-triphosphoguanosine)-ribonucleoside in mRNA + S-adenosyl-L-methionine = a 5'-end (N(7)-methyl 5'-triphosphoguanosine)-ribonucleoside in mRNA + S-adenosyl-L-homocysteine. The enzyme catalyses a 5'-end (N(7)-methyl 5'-triphosphoguanosine)-ribonucleoside in mRNA + S-adenosyl-L-methionine = a 5'-end (N(7)-methyl 5'-triphosphoguanosine)-(2'-O-methyl-ribonucleoside) in mRNA + S-adenosyl-L-homocysteine + H(+). The catalysed reaction is RNA(n) + a ribonucleoside 5'-triphosphate = RNA(n+1) + diphosphate. It catalyses the reaction Selective hydrolysis of -Xaa-Xaa-|-Yaa- bonds in which each of the Xaa can be either Arg or Lys and Yaa can be either Ser or Ala.. It carries out the reaction a ribonucleoside 5'-triphosphate + H2O = a ribonucleoside 5'-diphosphate + phosphate + H(+). The enzyme catalyses ATP + H2O = ADP + phosphate + H(+). Its function is as follows. Plays a role in virus budding by binding to the cell membrane and gathering the viral RNA into a nucleocapsid that forms the core of the mature virus particle. During virus entry, may induce genome penetration into the host cytoplasm after hemifusion induced by the surface proteins. Can migrate to the cell nucleus where it modulates host functions. Inhibits the integrated stress response (ISR) in the infected cell. Inhibits RNA silencing by interfering with host Dicer. In terms of biological role, prevents premature fusion activity of envelope proteins in trans-Golgi by binding to envelope protein E at pH 6.0. After virion release in extracellular space, gets dissociated from E dimers. Functionally, plays a role in host immune defense modulation and protection of envelope protein E during virion synthesis. PrM-E cleavage is inefficient, many virions are only partially matured and immature prM-E proteins could play a role in immune evasion. Contributes to fetal microcephaly in humans. Acts as a chaperone for envelope protein E during intracellular virion assembly by masking and inactivating envelope protein E fusion peptide. prM is the only viral peptide matured by host furin in the trans-Golgi network probably to avoid catastrophic activation of the viral fusion activity in acidic Golgi compartment prior to virion release. Its function is as follows. May play a role in virus budding. Exerts cytotoxic effects by activating a mitochondrial apoptotic pathway through M ectodomain. May display a viroporin activity. Binds to host cell surface receptors and mediates fusion between viral and cellular membranes. Efficient virus attachment to cell is, at least in part, mediated by host HAVCR1 in a cell-type specific manner. In addition, host NCAM1 can also be used as entry receptor. Interaction with host HSPA5 plays an important role in the early stages of infection as well. Envelope protein is synthesized in the endoplasmic reticulum and forms a heterodimer with protein prM. The heterodimer plays a role in virion budding in the ER, and the newly formed immature particle is covered with 60 spikes composed of heterodimers between precursor prM and envelope protein E. The virion is transported to the Golgi apparatus where the low pH causes the dissociation of PrM-E heterodimers and formation of E homodimers. PrM-E cleavage is inefficient, many virions are only partially matured and immature prM-E proteins could play a role in immune evasion. In terms of biological role, plays a role in the inhibition of host RLR-induced interferon-beta activation by targeting TANK-binding kinase 1/TBK1. In addition, recruits the host deubiquitinase USP8 to cleave 'Lys-11'-linked polyubiquitin chains from caspase-1/CASP1 thus inhibiting its proteasomal degradation. In turn, stabilized CASP1 promotes cleavage of cGAS, which inhibits its ability to recognize mitochondrial DNA release and initiate type I interferon signaling. Functionally, component of the viral RNA replication complex that recruits genomic RNA, the structural protein prM/E complex, and the NS2B/NS3 protease complex to the virion assembly site and orchestrates virus morphogenesis. Also antagonizes the host alpha/beta interferon antiviral response. May disrupt adherens junction formation and thereby impair proliferation of radial cells in the host cortex. Its function is as follows. Required cofactor for the serine protease function of NS3. Displays three enzymatic activities: serine protease, NTPase and RNA helicase. NS3 serine protease, in association with NS2B, performs its autocleavage and cleaves the polyprotein at dibasic sites in the cytoplasm: C-prM, NS2A-NS2B, NS2B-NS3, NS3-NS4A, NS4A-2K and NS4B-NS5. NS3 RNA helicase binds RNA and unwinds dsRNA in the 3' to 5' direction. Leads to translation arrest when expressed ex vivo. Disrupts host centrosome organization in a CEP63-dependent manner to degrade host TBK1 and inhibits innate immune response. Inhibits the integrated stress response (ISR) in the infected cell. In terms of biological role, regulates the ATPase activity of the NS3 helicase activity. NS4A allows NS3 helicase to conserve energy during unwinding. Cooperatively with NS4B suppresses the Akt-mTOR pathway and leads to cellular dysregulation. By inhibiting host ANKLE2 functions, may cause defects in brain development, such as microcephaly. Also antagonizes the host MDA5-mediated induction of alpha/beta interferon antiviral response. Leads to translation arrest when expressed ex vivo. Inhibits the integrated stress response (ISR) in the infected cell. Functionally, functions as a signal peptide for NS4B and is required for the interferon antagonism activity of the latter. Its function is as follows. Induces the formation of ER-derived membrane vesicles where the viral replication takes place. Also plays a role in the inhibition of host RLR-induced interferon-beta production at TANK-binding kinase 1/TBK1 level. Cooperatively with NS4A suppresses the Akt-mTOR pathway and leads to cellular dysregulation. Replicates the viral (+) and (-) RNA genome, and performs the capping of genomes in the cytoplasm. Methylates viral RNA cap at guanine N-7 and ribose 2'-O positions. Once sufficient NS5 is expressed, binds to the cap-proximal structure and inhibits further translation of the viral genome. Besides its role in RNA genome replication, also prevents the establishment of a cellular antiviral state by blocking the interferon-alpha/beta (IFN-alpha/beta) signaling pathway. Mechanistically, interferes with host kinases TBK1 and IKKE upstream of interferon regulatory factor 3/IRF3 to inhibit the RIG-I pathway. Also antagonizes type I interferon signaling by targeting STAT2 for degradation by the proteasome thereby preventing activation of JAK-STAT signaling pathway. Mechanistically, acts as a scaffold protein to connect host ZSWIM8/CUL3 ligase complex and STAT2, leading to STAT2 degradation. Within the host nucleus, disrupts host SUMO1 and STAT2 co-localization with PML, resulting in PML degradation. May also reduce immune responses by preventing the recruitment of the host PAF1 complex to interferon-responsive genes. This chain is Genome polyprotein, found in Zika virus (isolate ZIKV/Human/Cambodia/FSS13025/2010) (ZIKV).